The primary structure comprises 155 residues: Ribosomal RNA large subunit methyltransferase H (155 aa).

S-adenosyl-L-methionine-binding positions include Leu-73, Gly-104, and 123 to 128; that span reads LSPLTL.

It belongs to the RNA methyltransferase RlmH family. As to quaternary structure, homodimer.

The protein localises to the cytoplasm. The enzyme catalyses pseudouridine(1915) in 23S rRNA + S-adenosyl-L-methionine = N(3)-methylpseudouridine(1915) in 23S rRNA + S-adenosyl-L-homocysteine + H(+). In terms of biological role, specifically methylates the pseudouridine at position 1915 (m3Psi1915) in 23S rRNA. This chain is Ribosomal RNA large subunit methyltransferase H, found in Azotobacter vinelandii (strain DJ / ATCC BAA-1303).